A 316-amino-acid chain; its full sequence is Epoxide hydrolase 2 (316 aa).

Residues 25–302 (PAVLFLHGFP…AAHFINQERP (278 aa)) form the AB hydrolase-1 domain. Catalysis depends on D101, which acts as the Nucleophile. Y150 lines the an epoxide pocket. Y230 serves as the catalytic Proton donor. H295 serves as the catalytic Proton acceptor.

This sequence belongs to the AB hydrolase superfamily. Epoxide hydrolase family. As to quaternary structure, homodimer. In terms of tissue distribution, highly expressed in young fruits 15 days after anthesis (15-DAA). Also observed in stems and leaves.

It carries out the reaction an epoxide + H2O = an ethanediol. The catalysed reaction is (24S)-24,25-epoxycucurbitadienol + H2O = (24R)-24,25-dihydroxycucurbitadienol. It functions in the pathway secondary metabolite biosynthesis; terpenoid biosynthesis. Its function is as follows. Epoxide hydrolase involved in the biosynthesis of cucurbitacin and mogroside tetracyclic triterpene natural products (e.g. siamenoside I and mogrosides IV, V and VI). Cucurbitacins have cytotoxic properties and exhibit deterrent taste as a defense barrier against herbivores. Mogrosides are nonsugar highly oxygenated compounds used as high-intensity zero-calorie sweeteners; they also possess pharmacological properties such as regulating immunity, lowering blood sugar and lipid levels, protecting the liver, and acting as antioxidants and antitumor agents. Catalyzes the hydrolysis of aromatic epoxide-containing substrates, such as the conversion of 24,25-epoxycucurbitadienol to 24,25-dihydroxycucurbitadienol. In Siraitia grosvenorii (Monk's fruit), this protein is Epoxide hydrolase 2.